The sequence spans 275 residues: Mitochondrial outer membrane porin (275 aa).

This sequence belongs to the eukaryotic mitochondrial porin (TC 1.B.8.1) family.

The protein localises to the mitochondrion outer membrane. Forms a channel through the cell membrane that allows diffusion of small hydrophilic molecules. The channel adopts an open conformation at low or zero membrane potential and a closed conformation at potentials above 30-40 mV. The open state has a weak anion selectivity whereas the closed state is cation-selective. This chain is Mitochondrial outer membrane porin (VDAC1), found in Triticum aestivum (Wheat).